Reading from the N-terminus, the 340-residue chain is Transcription initiation factor IIB (340 aa).

Residues 16–49 form a TFIIB-type zinc finger; that stretch reads VKMICSECREDPPNLVEEFSSGDTVCGSCGLVLG. Zn(2+)-binding residues include C20, C23, C41, and C44. 2 tandem repeats follow at residues 128 to 204 and 239 to 315.

It belongs to the TFIIB family. Associates with TFIID-IIA (DA complex) to form TFIID-IIA-IIB (DAB-complex) which is then recognized by polymerase II.

The protein localises to the nucleus. General factor that plays a major role in the activation of eukaryotic genes transcribed by RNA polymerase II. The sequence is that of Transcription initiation factor IIB (sua7) from Schizosaccharomyces pombe (strain 972 / ATCC 24843) (Fission yeast).